Consider the following 637-residue polypeptide: Biosynthetic arginine decarboxylase (637 aa).

At Lys101 the chain carries N6-(pyridoxal phosphate)lysine. 286–296 contacts substrate; sequence FDVGGGLAVDY.

It belongs to the Orn/Lys/Arg decarboxylase class-II family. SpeA subfamily. Mg(2+) serves as cofactor. Requires pyridoxal 5'-phosphate as cofactor.

The enzyme catalyses L-arginine + H(+) = agmatine + CO2. It participates in amine and polyamine biosynthesis; agmatine biosynthesis; agmatine from L-arginine: step 1/1. Its function is as follows. Catalyzes the biosynthesis of agmatine from arginine. The sequence is that of Biosynthetic arginine decarboxylase from Shewanella sediminis (strain HAW-EB3).